A 215-amino-acid chain; its full sequence is E3 ubiquitin-protein ligase NleG (215 aa).

The RING/U-box domain stretch occupies residues 136–189 (CPITLCIPETGVFVRNAKNSEICSLYDHNALTELIRRNAPHPLSREPFVPEMIV). A PDZ-binding motif motif is present at residues 213–215 (TRI).

It belongs to the NleG E3 ligase family. Interacts with host GOPC (human protein). In terms of processing, two sizes of protein are detected upon expression in C.rodentium; only the smaller protein is secreted.

It localises to the secreted. The protein localises to the host cytoplasm. The catalysed reaction is S-ubiquitinyl-[E2 ubiquitin-conjugating enzyme]-L-cysteine + [acceptor protein]-L-lysine = [E2 ubiquitin-conjugating enzyme]-L-cysteine + N(6)-ubiquitinyl-[acceptor protein]-L-lysine.. Effector proteins function to alter host cell physiology and promote bacterial survival in host tissues. This protein is an E3 ubiquitin-protein ligase that probably interferes with the host's ubiquitination pathway and targets host proteins for proteasomal degradation. Can ubiquitinate ubiquitin, giving rise to polyubiquitin chains (in vitro). Does not complement an nleG8 deletion in C.rodentium. The chain is E3 ubiquitin-protein ligase NleG from Escherichia coli O157:H7.